The chain runs to 346 residues: MNTDSHNLSEPYNIGGQKYINMKKKEDLGVCQPGLTQKAFTVEDKFDYKAIIEKMEVYGLCVVKNFIETSRCDEILKEIEPHFYRYESWQGSPFPKETTVATRSVLHSSTVLKDVVCDRMFCDISKHFLNEENYFAAGKVINKCTSDIQLNSGIVYKVGAGASDQGYHREDIVHHTTHQACERFQYGTETMVGLGVAFTDMNKENGSTRMIVGSHLWGPHDSCGNFDKRMEFHVNVAKGDAVLFLGSLYHAASANRTSQDRVAGYFFMTKSYLKPEENLHLGTDLRVFKGLPLEALQLLGLGISEPFCGHIDYKSPGHLISSSLFENDIEKGYYGETIRVNYGSTQ.

Belongs to the PhyH family.

It is found in the cytoplasm. This is an uncharacterized protein from Saccharomyces cerevisiae (strain ATCC 204508 / S288c) (Baker's yeast).